A 400-amino-acid polypeptide reads, in one-letter code: Argininosuccinate synthase (400 aa).

A8–S16 provides a ligand contact to ATP. L-citrulline contacts are provided by Y87 and S92. G117 is an ATP binding site. L-aspartate is bound by residues T119, N123, and D124. N123 contacts L-citrulline. The L-citrulline site is built by R127, S175, E259, and Y271.

This sequence belongs to the argininosuccinate synthase family. Type 1 subfamily. Homotetramer.

It is found in the cytoplasm. The enzyme catalyses L-citrulline + L-aspartate + ATP = 2-(N(omega)-L-arginino)succinate + AMP + diphosphate + H(+). The protein operates within amino-acid biosynthesis; L-arginine biosynthesis; L-arginine from L-ornithine and carbamoyl phosphate: step 2/3. This chain is Argininosuccinate synthase, found in Parafrankia sp. (strain EAN1pec).